The primary structure comprises 221 residues: ATP phosphoribosyltransferase (221 aa).

Belongs to the ATP phosphoribosyltransferase family. Short subfamily. In terms of assembly, heteromultimer composed of HisG and HisZ subunits.

The protein localises to the cytoplasm. It catalyses the reaction 1-(5-phospho-beta-D-ribosyl)-ATP + diphosphate = 5-phospho-alpha-D-ribose 1-diphosphate + ATP. The protein operates within amino-acid biosynthesis; L-histidine biosynthesis; L-histidine from 5-phospho-alpha-D-ribose 1-diphosphate: step 1/9. Its function is as follows. Catalyzes the condensation of ATP and 5-phosphoribose 1-diphosphate to form N'-(5'-phosphoribosyl)-ATP (PR-ATP). Has a crucial role in the pathway because the rate of histidine biosynthesis seems to be controlled primarily by regulation of HisG enzymatic activity. In Anaeromyxobacter sp. (strain K), this protein is ATP phosphoribosyltransferase.